The sequence spans 757 residues: MAVSLPLFQFILFLLLLLLSRTVYAYLIGVGSYDITGPAADVNMMGYANSDQIASGIHFRLRARAFIVAEPQGNRVVFVNLDACMASQIVTIKVLERLKARYGELYTEKNVAISGIHTHAGPGGYLQYVTYIVTSLGFVRQSFDVVVNGIEQSIVQAHESLRPGSAFVNKGDLLDAGVNRSPSSYLNNPAAERSKYKYDVDKEMTLVKFVDSQLGPTGSFNWFATHGTSMSRTNSLISGDNKGAAARFMEDWFENGQKNSVSSRNIPRRVSTIVSDFSRNRDRLLDIAATYKSSRGHSVDKSLDVKTRVRNGSKRKFVSAFCQSNCGDVSPNTLGTFCIDTGLPCDFNHSTCNGQNELCYGRGPGYPDEFESTRIIGEKQFKMAVELFNKATEKLQGKIGYQHAYLDFSNLDVTVPKAGGGSETVKTCPAAMGFGFAAGTTDGPGAFDFKQGDDQGNVFWRLVRNVLRTPGPEQVQCQKPKPILLDTGEMKEPYDWAPSILPIQILRIGQLVILSVPGEFTTMAGRRLRDAIKSFLISSDPKEFSNNMHVVIAGLTNTYSQYIATFEEYEVQRYEGASTLYGRHTLTAYIQEFKKLATALVNGLTLPRGPQPPDLLDKQISLLSPVVVDSTPLGVKFGDVKADVPPKSTFRRGQQVNATFWSGCPRNDLMTEGSFAVVETLREGGKWAPVYDDDDFSLKFKWSRPAKLSSESQATIEWRVPESAVAGVYRIRHYGASKSLFGSISSFSGSSSAFVVV.

Positions 1 to 25 are cleaved as a signal peptide; it reads MAVSLPLFQFILFLLLLLLSRTVYA. N-linked (GlcNAc...) asparagine glycosylation is present at asparagine 311. Serine 330 functions as the Nucleophile in the catalytic mechanism. 2 N-linked (GlcNAc...) asparagine glycosylation sites follow: asparagine 348 and asparagine 657.

This sequence belongs to the neutral ceramidase family.

Its subcellular location is the secreted. The protein localises to the endoplasmic reticulum. It is found in the golgi apparatus. It carries out the reaction an N-acylsphing-4-enine + H2O = sphing-4-enine + a fatty acid. In terms of biological role, hydrolyzes the sphingolipid ceramide into sphingosine and free fatty acid. This is Neutral ceramidase 2 from Arabidopsis thaliana (Mouse-ear cress).